The following is a 234-amino-acid chain: Leucyl/phenylalanyl-tRNA--protein transferase (234 aa).

The protein belongs to the L/F-transferase family.

It localises to the cytoplasm. The catalysed reaction is N-terminal L-lysyl-[protein] + L-leucyl-tRNA(Leu) = N-terminal L-leucyl-L-lysyl-[protein] + tRNA(Leu) + H(+). The enzyme catalyses N-terminal L-arginyl-[protein] + L-leucyl-tRNA(Leu) = N-terminal L-leucyl-L-arginyl-[protein] + tRNA(Leu) + H(+). It catalyses the reaction L-phenylalanyl-tRNA(Phe) + an N-terminal L-alpha-aminoacyl-[protein] = an N-terminal L-phenylalanyl-L-alpha-aminoacyl-[protein] + tRNA(Phe). Its function is as follows. Functions in the N-end rule pathway of protein degradation where it conjugates Leu, Phe and, less efficiently, Met from aminoacyl-tRNAs to the N-termini of proteins containing an N-terminal arginine or lysine. The polypeptide is Leucyl/phenylalanyl-tRNA--protein transferase (Syntrophobacter fumaroxidans (strain DSM 10017 / MPOB)).